Reading from the N-terminus, the 441-residue chain is NADH-quinone oxidoreductase subunit D 1 (441 aa).

The protein belongs to the complex I 49 kDa subunit family. As to quaternary structure, NDH-1 is composed of 14 different subunits. Subunits NuoB, C, D, E, F, and G constitute the peripheral sector of the complex.

The protein resides in the cell membrane. It catalyses the reaction a quinone + NADH + 5 H(+)(in) = a quinol + NAD(+) + 4 H(+)(out). Its function is as follows. NDH-1 shuttles electrons from NADH, via FMN and iron-sulfur (Fe-S) centers, to quinones in the respiratory chain. The immediate electron acceptor for the enzyme in this species is believed to be a menaquinone. Couples the redox reaction to proton translocation (for every two electrons transferred, four hydrogen ions are translocated across the cytoplasmic membrane), and thus conserves the redox energy in a proton gradient. The chain is NADH-quinone oxidoreductase subunit D 1 from Salinispora arenicola (strain CNS-205).